We begin with the raw amino-acid sequence, 605 residues long: Ankyrin repeat domain-containing protein 13D (605 aa).

2 ANK repeats span residues 39–68 (RGRTPLELAVSLGNLESVRVLLRHNANVGK) and 72–101 (QGWAVLQEAVSTGDPEMVQLVLQYRDYQRA). Residues 306-333 (AQQHSSHTGAPVQQAASPTNPTAISPEE) form a disordered region. The span at 319–328 (QAASPTNPTA) shows a compositional bias: polar residues. 2 UIM domains span residues 482-501 (EDDDLLQFAIQQSLLEAGTE) and 528-547 (EEQLQLERALQESLQLSTEP). Residues 541–605 (LQLSTEPRGP…RILQLSLTEH (65 aa)) are disordered. A compositionally biased stretch (pro residues) spans 550–563 (PGSPPRTPPAPGPP). Position 552 is a phosphoserine (Ser-552). Thr-556 carries the phosphothreonine modification. Residues 564 to 575 (SFEEQLRLALEL) show a composition bias toward low complexity. 2 UIM domains span residues 564–583 (SFEEQLRLALELSSREQEER) and 589–605 (QEEEDLQRILQLSLTEH). Positions 576–589 (SSREQEERERRGQQ) are enriched in basic and acidic residues.

Interacts with EGFR (ubiquitinated); the interaction is direct and may regulate EGFR internalization.

The protein localises to the cell membrane. The protein resides in the late endosome. Ubiquitin-binding protein that specifically recognizes and binds 'Lys-63'-linked ubiquitin. Does not bind 'Lys-48'-linked ubiquitin. Positively regulates the internalization of ligand-activated EGFR by binding to the Ub moiety of ubiquitinated EGFR at the cell membrane. The protein is Ankyrin repeat domain-containing protein 13D (ANKRD13D) of Homo sapiens (Human).